A 141-amino-acid chain; its full sequence is Large ribosomal subunit protein bL17 (141 aa).

The protein belongs to the bacterial ribosomal protein bL17 family. As to quaternary structure, part of the 50S ribosomal subunit. Contacts protein L32.

The protein is Large ribosomal subunit protein bL17 of Sinorhizobium fredii (strain NBRC 101917 / NGR234).